The sequence spans 139 residues: MIIGIGSDLIDIRRIENSLQRFGERFVNRCFTDIEIAKSDARKNRAASYAKRFAAKEACSKALGTGLAQGVFWKDMGVVNMPGGKPTMQLTGGAAARLQEMLPVGHRAAIHLTITDDFPLAQAFVIIEALPVAPAEGTV.

Aspartate 8 and glutamate 57 together coordinate Mg(2+).

Belongs to the P-Pant transferase superfamily. AcpS family. Mg(2+) is required as a cofactor.

It localises to the cytoplasm. The enzyme catalyses apo-[ACP] + CoA = holo-[ACP] + adenosine 3',5'-bisphosphate + H(+). Functionally, transfers the 4'-phosphopantetheine moiety from coenzyme A to a Ser of acyl-carrier-protein. This Sinorhizobium fredii (strain NBRC 101917 / NGR234) protein is Holo-[acyl-carrier-protein] synthase.